Consider the following 141-residue polypeptide: Putative nickel-responsive regulator (141 aa).

Residues H80, H91, H93, and C99 each coordinate Ni(2+).

It belongs to the transcriptional regulatory CopG/NikR family. Requires Ni(2+) as cofactor.

In terms of biological role, transcriptional regulator. In Methanococcus maripaludis (strain DSM 14266 / JCM 13030 / NBRC 101832 / S2 / LL), this protein is Putative nickel-responsive regulator.